Reading from the N-terminus, the 369-residue chain is Pyruvate dehydrogenase E1 component subunit alpha (369 aa).

Heterodimer of an alpha and a beta chain. Requires thiamine diphosphate as cofactor.

The enzyme catalyses N(6)-[(R)-lipoyl]-L-lysyl-[protein] + pyruvate + H(+) = N(6)-[(R)-S(8)-acetyldihydrolipoyl]-L-lysyl-[protein] + CO2. The pyruvate dehydrogenase complex catalyzes the overall conversion of pyruvate to acetyl-CoA and CO(2). It contains multiple copies of three enzymatic components: pyruvate dehydrogenase (E1), dihydrolipoamide acetyltransferase (E2) and lipoamide dehydrogenase (E3). The polypeptide is Pyruvate dehydrogenase E1 component subunit alpha (pdhA) (Geobacillus stearothermophilus (Bacillus stearothermophilus)).